The sequence spans 188 residues: MASTSDIRNGLCIRYNHDIYKITEFLHVKPGKGPAFVRTKLKSVTTGKVLDNTFSAGHKIEEIRVETHKFQFLYEDGEFWHFMNVEDYTQIRLTENALDMPKLIKEGEVVTILINTEDNMPLSVDMPASVVLEVTHTEPGVKGNTATNATKPATVETGFEVNVPLFINEGDKIKIETDKGTYKERIKE.

Belongs to the elongation factor P family.

The protein resides in the cytoplasm. It functions in the pathway protein biosynthesis; polypeptide chain elongation. In terms of biological role, involved in peptide bond synthesis. Stimulates efficient translation and peptide-bond synthesis on native or reconstituted 70S ribosomes in vitro. Probably functions indirectly by altering the affinity of the ribosome for aminoacyl-tRNA, thus increasing their reactivity as acceptors for peptidyl transferase. The chain is Elongation factor P from Christiangramia forsetii (strain DSM 17595 / CGMCC 1.15422 / KT0803) (Gramella forsetii).